The sequence spans 435 residues: Serine hydroxymethyltransferase (435 aa).

Residues leucine 133 and 137–139 (GHL) contribute to the (6S)-5,6,7,8-tetrahydrofolate site. At lysine 242 the chain carries N6-(pyridoxal phosphate)lysine.

It belongs to the SHMT family. As to quaternary structure, homodimer. Pyridoxal 5'-phosphate serves as cofactor.

It localises to the cytoplasm. The enzyme catalyses (6R)-5,10-methylene-5,6,7,8-tetrahydrofolate + glycine + H2O = (6S)-5,6,7,8-tetrahydrofolate + L-serine. Its pathway is one-carbon metabolism; tetrahydrofolate interconversion. It participates in amino-acid biosynthesis; glycine biosynthesis; glycine from L-serine: step 1/1. Catalyzes the reversible interconversion of serine and glycine with tetrahydrofolate (THF) serving as the one-carbon carrier. This reaction serves as the major source of one-carbon groups required for the biosynthesis of purines, thymidylate, methionine, and other important biomolecules. Also exhibits THF-independent aldolase activity toward beta-hydroxyamino acids, producing glycine and aldehydes, via a retro-aldol mechanism. The sequence is that of Serine hydroxymethyltransferase from Sphingopyxis alaskensis (strain DSM 13593 / LMG 18877 / RB2256) (Sphingomonas alaskensis).